Reading from the N-terminus, the 609-residue chain is Zinc metalloproteinase/disintegrin-like HR1a (609 aa).

A signal peptide spans Met-1 to Ser-20. Positions Ile-21–Ala-190 are excised as a propeptide. The region spanning Arg-200–Pro-396 is the Peptidase M12B domain. Ca(2+) contacts are provided by Glu-203 and Asp-287. Asn-298 is a glycosylation site (N-linked (GlcNAc...) asparagine). Cystine bridges form between Cys-311/Cys-391, Cys-351/Cys-375, and Cys-353/Cys-358. His-336 is a Zn(2+) binding site. The active site involves Glu-337. Positions 340 and 346 each coordinate Zn(2+). A glycan (N-linked (GlcNAc...) asparagine) is linked at Asn-350. Asn-374 is a glycosylation site (N-linked (GlcNAc...) asparagine). 2 residues coordinate Ca(2+): Cys-391 and Asn-394. The propeptide occupies Leu-397 to Asp-400. The region spanning Pro-404–Asn-490 is the Disintegrin domain. Val-406, Asn-409, Leu-411, Glu-413, Glu-416, and Asp-419 together coordinate Ca(2+). 22 disulfide bridges follow: Cys-407–Cys-426, Cys-407–Cys-436, Cys-418–Cys-431, Cys-418–Cys-436, Cys-420–Cys-426, Cys-430–Cys-453, Cys-444–Cys-450, Cys-449–Cys-475, Cys-462–Cys-482, Cys-469–Cys-494, Cys-469–Cys-501, Cys-494–Cys-506, Cys-501–Cys-506, Cys-513–Cys-528, Cys-513–Cys-563, Cys-528–Cys-571, Cys-541–Cys-551, Cys-551–Cys-558, Cys-558–Cys-597, Cys-563–Cys-571, Cys-591–Cys-602, and Cys-597–Cys-602. The short motif at Glu-468–Asp-470 is the D/ECD-tripeptide element. Ca(2+) contacts are provided by Asp-470, Glu-473, and Asp-485. Residue Asn-520 is glycosylated (N-linked (GlcNAc...) asparagine).

Belongs to the venom metalloproteinase (M12B) family. P-III subfamily. P-IIIb sub-subfamily. As to quaternary structure, monomer. Zn(2+) serves as cofactor. As to expression, expressed by the venom gland.

It localises to the secreted. In terms of biological role, zinc protease that induces hemorrhage and has proteolytic activity. Has preference for Ala, His, Pro, Met, and Tyr at the P1 position, in descending order (in vitro). Predominantly prefers Val and Asp at the P3 and P2 positions, respectively. Its function is as follows. Inhibits platelet aggregation induced by ADP, thrombin, platelet-activating factor and collagen. Acts by inhibiting fibrinogen interaction with platelet receptors alpha-IIb/beta-3 (ITGA2B/ITGB3). This chain is Zinc metalloproteinase/disintegrin-like HR1a, found in Protobothrops flavoviridis (Habu).